A 780-amino-acid chain; its full sequence is Cyclin-F (780 aa).

The Nuclear localization signal 1 signature appears at 20–28; sequence KRRIKRRPR. In terms of domain architecture, F-box spans 29–76; that stretch reads NLTILSLPEDVLFHILKWLSVGDILAVRAVHSHLKYLVDNHASVWASA. Residues 288–405 form the Cyclin N-terminal domain; it reads QASQAVNKQQ…EIISALEGKI (118 aa). 3 short sequence motifs (d box) span residues 310–313, 343–346, and 349–352; these read RYIL, RRRL, and RYKL. 3 disordered regions span residues 544-594, 651-733, and 745-780; these read QESP…AELS, QESS…STKP, and CRPP…FLKL. The short motif at 568-574 is the Nuclear localization signal 2 element; that stretch reads RRSKRKR. The segment at 582–761 is PEST; sequence RGSFVTTPTA…ESGAHQQPVK (180 aa). Residues 585 to 594 show a composition bias toward polar residues; it reads FVTTPTAELS. 2 stretches are compositionally biased toward low complexity: residues 695–708 and 719–731; these read SGYS…PISS and STSV…HSST. A D box 4 motif is present at residues 762–765; the sequence is RQNL.

Belongs to the cyclin family. Cyclin AB subfamily. As to quaternary structure, component of the SCF(CCNF) complex consisting of CUL1, RBX1, SKP1 and CCNF. Interacts with SKP1. Interacts with CUL1. Interacts with CCNB1; interaction is required for nuclear localization of CCNB1. Interacts with CCP110; this interaction leads to CCP110 ubiquitination and degradation via the proteasome pathway. Interacts (via the Cyclin N-terminal domain) with MYBL2/BMYB. Interacts with FZR1/CDH1 (via N-terminus). Interacts with RRM2 (via Cy motif and when phosphorylated at 'Thr-33'); the interaction occurs exclusively in G2 and early M. Interacts with CDC6 (via Cy motif); the interaction takes place during G2 and M phase. In terms of processing, degraded when the spindle assembly checkpoint is activated during the G2-M transition. Degradation is not dependent on the proteasome or ubiquitin and depends on the C-terminal PEST sequence. Phosphorylated just before cells enter into mitosis. Post-translationally, ubiquitinated by the anaphase-promoting complex (APC/C); leading to its degradation by the proteasome.

The protein resides in the nucleus. The protein localises to the cytoplasm. It localises to the perinuclear region. It is found in the cytoskeleton. Its subcellular location is the microtubule organizing center. The protein resides in the centrosome. The protein localises to the centriole. Its function is as follows. Substrate recognition component of a SCF (SKP1-CUL1-F-box protein) E3 ubiquitin-protein ligase complex which mediates the ubiquitination and subsequent proteasomal degradation of target proteins. The SCF(CCNF) E3 ubiquitin-protein ligase complex is an integral component of the ubiquitin proteasome system (UPS) and links proteasome degradation to the cell cycle. Mediates the substrate recognition and the proteasomal degradation of various target proteins involved in the regulation of cell cycle progression and in the maintenance of genome stability. Mediates the ubiquitination and subsequent proteasomal degradation of CP110 during G2 phase, thereby acting as an inhibitor of centrosome reduplication. In G2, mediates the ubiquitination and proteasomal degradation of CDC6, thereby suppressing DNA re-replication and preventing genome instability. Involved in the ubiquitination and degradation of the substrate adapter CDH1 of the anaphase-promoting complex (APC/C), thereby acting as an antagonist of APC/C in regulating G1 progression and S phase entry. May play a role in the G2 cell cycle checkpoint control after DNA damage, possibly by promoting the ubiquitination of MYBL2/BMYB. In Rattus norvegicus (Rat), this protein is Cyclin-F (Ccnf).